We begin with the raw amino-acid sequence, 423 residues long: MKIAFFNPQGNFDKKDSHLTEHPDFGGQLIYVKELAKAMGKMGNKVDIITRKIIDKKWPEFSGDFDYYPDAENVRIVRIAFGGDKFLNKERLWDFLGEYVKNIYRFYQKEGFPDFVTTHYGDGGIAGAMFKKLTHIPYSFTAHSLGAQKKDKFKNAKDAEERYRFSIRISAEKVAMKYASFIVTSTQQEKEEQYSHNEYIDVYPEIKDKIFVIPPGVNTNIFYPDDTDEYKFSKLPIIVSSRLDPKKNIEFVIESFNKYLKDGFELIIVLRKKPEEYTGYERQLIEKAKKAKGKFLVITSQKELAKLYNSAAKHRGIFALTSHYEPFGLAIIEAMACKLPVISTRNGGPVEILDNGKYGHLVSTHEEFKEAALKIKDNYEKLSEESYKRVMEKYTWERCAKEYLNLIEKENVILPEFFEKQMG.

It belongs to the glycosyltransferase 1 family.

It catalyses the reaction beta-D-fructose 6-phosphate + UDP-alpha-D-glucose = sucrose 6(F)-phosphate + UDP + H(+). In terms of biological role, plays a role in sucrose synthesis by catalyzing the first step of sucrose biosynthesis from UDP-glucose and fructose-6-phosphate. The polypeptide is Probable sucrose-phosphate synthase (Thermosipho melanesiensis (strain DSM 12029 / CIP 104789 / BI429)).